The following is a 929-amino-acid chain: Pyruvate dehydrogenase E1 component (929 aa).

An Isoglutamyl lysine isopeptide (Lys-Gln) (interchain with Q-Cter in protein Pup) cross-link involves residue K375.

In terms of assembly, homodimer. Part of the PDH complex, consisting of multiple copies of AceE (E1), DlaT (E2) and Lpd (E3). Requires Mg(2+) as cofactor. Thiamine diphosphate serves as cofactor.

The catalysed reaction is N(6)-[(R)-lipoyl]-L-lysyl-[protein] + pyruvate + H(+) = N(6)-[(R)-S(8)-acetyldihydrolipoyl]-L-lysyl-[protein] + CO2. Its function is as follows. Component of the pyruvate dehydrogenase (PDH) complex, that catalyzes the overall conversion of pyruvate to acetyl-CoA and CO(2). AceE has reductase activity with pyruvate but does not react with 2-oxoglutarate. This Mycolicibacterium smegmatis (strain ATCC 700084 / mc(2)155) (Mycobacterium smegmatis) protein is Pyruvate dehydrogenase E1 component (aceE).